A 439-amino-acid polypeptide reads, in one-letter code: MFSKLAHLQRFAVLSRGVHSSVASATSVATKKTVQGPPTSDDIFEREYKYGAHNYHPLPVALERGKGIYLWDVEGRKYFDFLSSYSAVNQGHCHPKIVNALKSQVDKLTLTSRAFYNNVLGEYEEYITKLFNYHKVLPMNTGVEAGETACKLARKWGYTVKGIQKYKAKIVFAAGNFWGRTLSAISSSTDPTSYDGFGPFMPGFDIIPYNDLPALERALQDPNVAAFMVEPIQGEAGVVVPDPGYLMGVRELCTRHQVLFIADEIQTGLARTGRWLAVDYENVRPDIVLLGKALSGGLYPVSAVLCDDDIMLTIKPGEHGSTYGGNPLGCRVAIAALEVLEEENLAENADKLGIILRNELMKLPSDVVTAVRGKGLLNAIVIKETKDWDAWKVCLRLRDNGLLAKPTHGDIIRFAPPLVIKEDELRESIEIINKTILSF.

A mitochondrion; in hepatic form-targeting transit peptide spans 1 to 25 (MFSKLAHLQRFAVLSRGVHSSVASA). The transit peptide at 1 to 35 (MFSKLAHLQRFAVLSRGVHSSVASATSVATKKTVQ) directs the protein to the mitochondrion; in renal form. An N6-acetyllysine mark is found at Lys49 and Lys66. Position 102 is an N6-succinyllysine (Lys102). N6-acetyllysine; alternate is present on Lys107. Position 107 is an N6-succinyllysine; alternate (Lys107). Lys292 bears the N6-(pyridoxal phosphate)lysine mark. At Lys362 the chain carries N6-acetyllysine; alternate. The residue at position 362 (Lys362) is an N6-succinyllysine; alternate. N6-acetyllysine occurs at positions 386 and 392. The residue at position 405 (Lys405) is an N6-acetyllysine; alternate. Lys405 carries the post-translational modification N6-succinyllysine; alternate. Lys421 is modified (N6-acetyllysine).

The protein belongs to the class-III pyridoxal-phosphate-dependent aminotransferase family. Homohexamer. Requires pyridoxal 5'-phosphate as cofactor.

Its subcellular location is the mitochondrion matrix. It carries out the reaction L-ornithine + 2-oxoglutarate = L-glutamate 5-semialdehyde + L-glutamate. The protein operates within amino-acid biosynthesis; L-proline biosynthesis; L-glutamate 5-semialdehyde from L-ornithine: step 1/1. In terms of biological role, catalyzes the reversible interconversion of L-ornithine and 2-oxoglutarate to L-glutamate semialdehyde and L-glutamate. The protein is Ornithine aminotransferase, mitochondrial (OAT) of Homo sapiens (Human).